A 354-amino-acid chain; its full sequence is Homer protein homolog 2 (354 aa).

Residues 1–110 (MGEQPIFTTR…EKFQEVKEAA (110 aa)) form the WH1 domain. A coiled-coil region spans residues 92-122 (SEQQLTKFAEKFQEVKEAAKIAKDKTQEKIE). Residues 112 to 122 (IAKDKTQEKIE) show a composition bias toward basic and acidic residues. Residues 112–166 (IAKDKTQEKIETSSNHSQESGRETPSSTQASSVNGTDDEKASHAGPANTHLKSEN) are disordered. Over residues 123-146 (TSSNHSQESGRETPSSTQASSVNG) the composition is skewed to polar residues. Residues 160-329 (THLKSENDKL…RHLKVELKSF (170 aa)) adopt a coiled-coil conformation.

Belongs to the Homer family. Forms coiled-coil structures that mediate homo- and heteromultimerization. Interacts with NFATC2; interaction is reduced by AKT activation. Interacts with NFATC1 and NFATC4. Interacts with DAGLA (via PPXXF motif); this interaction is required for the cell membrane localization of DAGLA.

The protein resides in the cytoplasm. It is found in the cell membrane. It localises to the postsynaptic density. The protein localises to the synapse. Its subcellular location is the cell projection. The protein resides in the stereocilium. Its function is as follows. Postsynaptic density scaffolding protein. Binds and cross-links cytoplasmic regions of GRM1, GRM5, ITPR1, DNM3, RYR1, RYR2, SHANK1 and SHANK3. By physically linking GRM1 and GRM5 with ER-associated ITPR1 receptors, it aids the coupling of surface receptors to intracellular calcium release. May also couple GRM1 to PI3 kinase through its interaction with AGAP2. Isoforms can be differently regulated and may play an important role in maintaining the plasticity at glutamatergic synapses. Required for normal hearing. Negatively regulates T cell activation by inhibiting the calcineurin-NFAT pathway. Acts by competing with calcineurin/PPP3CA for NFAT protein binding, hence preventing NFAT activation by PPP3CA. This chain is Homer protein homolog 2, found in Homo sapiens (Human).